The sequence spans 571 residues: Hemagglutinin-neuraminidase (571 aa).

At 1-26 the chain is on the intravirion side; sequence MDRAVSRVVLENEEREAKNTWRFVFR. A helical transmembrane segment spans residues 27–47; that stretch reads IAVLLLIVMTLAISAAALVYS. Topologically, residues 48–571 are virion surface; the sequence is MGASTPRDLA…LVEILKDDRV (524 aa). N119 carries an N-linked (GlcNAc...) asparagine; by host glycan. An important for interaction with fusion/F protein region spans residues 124-152; it reads GAPVHDPDYIGGIGKELIVDDTSDVTSFY. 3 cysteine pairs are disulfide-bonded: C172–C196, C186–C247, and C238–C251. The involved in neuraminidase activity stretch occupies residues 234 to 239; it reads NRKSCS. Residue N341 is glycosylated (N-linked (GlcNAc...) asparagine; by host). A disulfide bridge connects residues C455 and C465. N-linked (GlcNAc...) asparagine; by host glycosylation is found at N481 and N508. Residues C531 and C542 are joined by a disulfide bond.

Belongs to the paramyxoviruses hemagglutinin-neuraminidase family. Homotetramer; composed of disulfide-linked homodimers. Interacts with F protein trimer. Interacts with host CG-1B; this interaction inhibits viral adsorption and replication rather than internalization.

It localises to the virion membrane. The protein localises to the host cell membrane. The catalysed reaction is Hydrolysis of alpha-(2-&gt;3)-, alpha-(2-&gt;6)-, alpha-(2-&gt;8)- glycosidic linkages of terminal sialic acid residues in oligosaccharides, glycoproteins, glycolipids, colominic acid and synthetic substrates.. Its function is as follows. Mediates the viral entry into the host cell together with fusion/F protein. Attaches the virus to sialic acid-containing cell receptors and thereby initiates infection. Binding of HN protein to the receptor induces a conformational change that allows the F protein to trigger virion/cell membranes fusion. In terms of biological role, neuraminidase activity ensures the efficient spread of the virus by dissociating the mature virions from the neuraminic acid containing glycoproteins. This Newcastle disease virus (strain Iba/85) (NDV) protein is Hemagglutinin-neuraminidase (HN).